We begin with the raw amino-acid sequence, 175 residues long: B9 domain-containing protein 2 (175 aa).

A C2 B9-type domain is found at 2-118 (AEVHVIGQIM…DCPTWRPLGS (117 aa)).

The protein belongs to the B9D family. As to quaternary structure, part of the tectonic-like complex (also named B9 complex). Interacts with TUBG1.

The protein localises to the cytoplasm. It localises to the cytoskeleton. It is found in the cilium basal body. The protein resides in the cilium axoneme. Its subcellular location is the nucleus. Functionally, component of the tectonic-like complex, a complex localized at the transition zone of primary cilia and acting as a barrier that prevents diffusion of transmembrane proteins between the cilia and plasma membranes. This Bos taurus (Bovine) protein is B9 domain-containing protein 2 (B9D2).